The chain runs to 115 residues: NADH-ubiquinone oxidoreductase chain 3 (115 aa).

The residue at position 1 (Met1) is an N-formylmethionine. 3 consecutive transmembrane segments (helical) span residues 3–23, 55–75, and 84–104; these read LMLA…IAFW, FFLV…LLPL, and LNTM…SLAY.

As to quaternary structure, core subunit of respiratory chain NADH dehydrogenase (Complex I) which is composed of 45 different subunits. Interacts with TMEM186. Interacts with TMEM242.

The protein resides in the mitochondrion inner membrane. The catalysed reaction is a ubiquinone + NADH + 5 H(+)(in) = a ubiquinol + NAD(+) + 4 H(+)(out). Core subunit of the mitochondrial membrane respiratory chain NADH dehydrogenase (Complex I) which catalyzes electron transfer from NADH through the respiratory chain, using ubiquinone as an electron acceptor. Essential for the catalytic activity of complex I. This chain is NADH-ubiquinone oxidoreductase chain 3, found in Bos taurus (Bovine).